Consider the following 485-residue polypeptide: Probable cytosol aminopeptidase (485 aa).

Mn(2+) is bound by residues Lys251 and Asp256. The active site involves Lys263. Positions 274, 333, and 335 each coordinate Mn(2+). Arg337 is a catalytic residue.

Belongs to the peptidase M17 family. Mn(2+) is required as a cofactor.

The protein localises to the cytoplasm. The catalysed reaction is Release of an N-terminal amino acid, Xaa-|-Yaa-, in which Xaa is preferably Leu, but may be other amino acids including Pro although not Arg or Lys, and Yaa may be Pro. Amino acid amides and methyl esters are also readily hydrolyzed, but rates on arylamides are exceedingly low.. The enzyme catalyses Release of an N-terminal amino acid, preferentially leucine, but not glutamic or aspartic acids.. Its function is as follows. Presumably involved in the processing and regular turnover of intracellular proteins. Catalyzes the removal of unsubstituted N-terminal amino acids from various peptides. The protein is Probable cytosol aminopeptidase of Brucella melitensis biotype 1 (strain ATCC 23456 / CCUG 17765 / NCTC 10094 / 16M).